The chain runs to 218 residues: Large ribosomal subunit protein uL3 (218 aa).

Positions 126 to 170 are disordered; it reads HGFSRGPMSHGSKNHREPGSTGAGTTPGRIYPGKRMAGRYGGKKR.

The protein belongs to the universal ribosomal protein uL3 family. In terms of assembly, part of the 50S ribosomal subunit. Forms a cluster with proteins L14 and L19.

Its function is as follows. One of the primary rRNA binding proteins, it binds directly near the 3'-end of the 23S rRNA, where it nucleates assembly of the 50S subunit. The polypeptide is Large ribosomal subunit protein uL3 (Prochlorococcus marinus (strain MIT 9313)).